The following is a 361-amino-acid chain: Phosphoserine aminotransferase (361 aa).

Arginine 42 contributes to the L-glutamate binding site. Residues 76 to 77, tryptophan 102, threonine 153, aspartate 173, and glutamine 196 contribute to the pyridoxal 5'-phosphate site; that span reads AR. Position 197 is an N6-(pyridoxal phosphate)lysine (lysine 197). 238 to 239 lines the pyridoxal 5'-phosphate pocket; that stretch reads NT.

The protein belongs to the class-V pyridoxal-phosphate-dependent aminotransferase family. SerC subfamily. In terms of assembly, homodimer. Pyridoxal 5'-phosphate is required as a cofactor.

The protein localises to the cytoplasm. The catalysed reaction is O-phospho-L-serine + 2-oxoglutarate = 3-phosphooxypyruvate + L-glutamate. The enzyme catalyses 4-(phosphooxy)-L-threonine + 2-oxoglutarate = (R)-3-hydroxy-2-oxo-4-phosphooxybutanoate + L-glutamate. It functions in the pathway amino-acid biosynthesis; L-serine biosynthesis; L-serine from 3-phospho-D-glycerate: step 2/3. Its pathway is cofactor biosynthesis; pyridoxine 5'-phosphate biosynthesis; pyridoxine 5'-phosphate from D-erythrose 4-phosphate: step 3/5. In terms of biological role, catalyzes the reversible conversion of 3-phosphohydroxypyruvate to phosphoserine and of 3-hydroxy-2-oxo-4-phosphonooxybutanoate to phosphohydroxythreonine. The chain is Phosphoserine aminotransferase from Buchnera aphidicola subsp. Schizaphis graminum (strain Sg).